A 1170-amino-acid chain; its full sequence is Thrombospondin-1 (1170 aa).

The first 18 residues, 1–18 (MGLAWGLGVLLLLHACGS), serve as a signal peptide directing secretion. Residues 47-95 (RLVKGPDPSSPAFRIEDANLIPPVPDKKFQDLVDAVRAEKGFLLLASLR) are heparin-binding. One can recognise a Laminin G-like domain in the interval 65–270 (NLIPPVPDKK…HKTKDLQAIC (206 aa)). Cys-171 and Cys-232 form a disulfide bridge. 2 N-linked (GlcNAc...) asparagine glycosylation sites follow: Asn-248 and Asn-360. The region spanning 316–373 (PLCYHNGVQYRTGDEWTVDSCTECRCQNSVTICKKVSCPIMPCSNATVPDGECCPRCW) is the VWFC domain. 3 consecutive TSP type-1 domains span residues 379–429 (DDGW…QECD), 435–490 (DGGW…DSCP), and 492–547 (NGGW…QDCP). Intrachain disulfides connect Cys-391/Cys-423, Cys-395/Cys-428, Cys-406/Cys-413, Cys-447/Cys-484, Cys-451/Cys-489, Cys-462/Cys-474, Cys-504/Cys-541, Cys-508/Cys-546, Cys-519/Cys-531, Cys-551/Cys-562, Cys-556/Cys-572, Cys-575/Cys-586, Cys-592/Cys-608, Cys-599/Cys-617, Cys-620/Cys-644, Cys-650/Cys-663, Cys-657/Cys-676, Cys-678/Cys-689, Cys-705/Cys-713, Cys-718/Cys-738, Cys-754/Cys-774, Cys-777/Cys-797, Cys-813/Cys-833, Cys-836/Cys-856, Cys-874/Cys-894, Cys-910/Cys-930, and Cys-946/Cys-1167. The EGF-like 1 domain occupies 547 to 587 (PIDGCLSNPCFAGVQCTSYPDGSWKCGACPPGYSGDGVECK). Ser-553 carries O-linked (Xyl) serine glycosylation. An EGF-like 2 domain is found at 646–690 (PRNPCTDGTHDCNKNAKCNYLGHYSDPMYRCECKPGYAGNGIICG). 8 TSP type-3 repeats span residues 691–726 (EDTD…NSGQ), 727–762 (EDYD…NPAQ), 763–785 (YDYD…NPDQ), 786–821 (ADTD…NVDQ), 822–844 (KDTD…NPDQ), 845–882 (LDSD…NANQ), 883–918 (ADHD…NPDQ), and 919–954 (KDSD…DISE). Asn-708 carries N-linked (GlcNAc...) asparagine glycosylation. Residues 839–944 (EHNPDQLDSD…DQDKVPDIDD (106 aa)) form a disordered region. Basic and acidic residues-rich tracts occupy residues 840–854 (HNPD…RIGD), 883–894 (ADHDKDGKGDAC), and 917–941 (DQKD…KVPD). The short motif at 926-928 (RGD) is the Cell attachment site element. A TSP C-terminal domain is found at 958 to 1170 (RRFQMIPLDP…SDLKYECRDS (213 aa)). N-linked (GlcNAc...) asparagine glycans are attached at residues Asn-1067 and Asn-1085.

It belongs to the thrombospondin family. Homotrimer; disulfide-linked. Can bind to fibrinogen, fibronectin, laminin, type V collagen and integrins alpha-V/beta-1, alpha-V/beta-3 and alpha-IIb/beta-3. Binds heparin. Interacts (via the C-terminal domain) with CD47. Interacts (via the TSP type I repeats) with CD36; the interaction conveys an antiangiogenic effect. Interacts (via the TSP type I repeats) with HRG; the interaction blocks the antiangiogenic effect of THBS1 with CD36. Interacts with ATF6 (via lumenal domain). Interacts with FN1; this interaction is enhanced by TNFAIP6, which may act as a bridging molecule between FN1 and THBS1. Interacts with SIRPA; the interaction stimulates phosphorylation of SIRPA. As to expression, odontoblasts.

It localises to the secreted. It is found in the cell surface. Its subcellular location is the extracellular space. The protein resides in the extracellular matrix. The protein localises to the endoplasmic reticulum. It localises to the sarcoplasmic reticulum. Its function is as follows. Adhesive glycoprotein that mediates cell-to-cell and cell-to-matrix interactions. Multifunctional, involved in inflammation, angiogenesis, wound healing, reactive oxygen species (ROS) signaling, nitrous oxide (NO) signaling, apoptosis, senescence, aging, cellular self-renewal, stemness, and cardiovascular and metabolic homeostasis. Negatively modulates dendritic cell activation and cytokine release, as part of an autocrine feedback loop, contributing to the resolution of inflammation and immune homeostasis. Ligand for receptor CD47. Modulates nitrous oxide (NO) signaling via CD47, hence playing a role as a pressor agent, supporting blood pressure. Plays a role in endothelial cell senescence, acting via CD47, by increasing the abundance and activation of NADPH oxidase NOX1, and so generating excess ROS. Inhibits stem cell self-renewal, acting via CD47 signaling, probably by regulation of the stem cell transcription factors POU5F1/OCT4, SOX2, MYC/c-Myc and KLF4. Negatively modulates wound healing, acting via CD47. Ligand for receptor CD36. Involved in inducing apoptosis in podocytes in response to elevated free fatty acids, acting via CD36. Plays a role in suppressing angiogenesis, acting, depending on context, via CD36 or CD47. Promotes cellular senescence in a TP53-CDKN1A-RB1 signaling-dependent manner. Ligand for immunoglobulin-like cell surface receptor SIRPA. Involved in ROS signaling in non-phagocytic cells, stimulating NADPH oxidase-derived ROS production, acting via interaction with SIRPA. Plays a role in metabolic dysfunction in diet-induced obesity, perhaps acting by exacerbating adipose inflammatory activity; its effects may be mediated, at least in part, through enhanced adipocyte proliferation. Plays a role in ER stress response, via its interaction with the activating transcription factor 6 alpha (ATF6) which produces adaptive ER stress response factors. May be involved in age-related conditions, including metabolic dysregulation, during normal aging. This is Thrombospondin-1 (THBS1) from Bos taurus (Bovine).